The sequence spans 363 residues: Chorismate synthase (363 aa).

Positions 48 and 54 each coordinate NADP(+). FMN contacts are provided by residues 131–133 (RSS), 244–245 (NA), glycine 288, 303–307 (KPTSS), and arginine 329.

This sequence belongs to the chorismate synthase family. Homotetramer. The cofactor is FMNH2.

It catalyses the reaction 5-O-(1-carboxyvinyl)-3-phosphoshikimate = chorismate + phosphate. The protein operates within metabolic intermediate biosynthesis; chorismate biosynthesis; chorismate from D-erythrose 4-phosphate and phosphoenolpyruvate: step 7/7. Its function is as follows. Catalyzes the anti-1,4-elimination of the C-3 phosphate and the C-6 proR hydrogen from 5-enolpyruvylshikimate-3-phosphate (EPSP) to yield chorismate, which is the branch point compound that serves as the starting substrate for the three terminal pathways of aromatic amino acid biosynthesis. This reaction introduces a second double bond into the aromatic ring system. This chain is Chorismate synthase, found in Hyphomonas neptunium (strain ATCC 15444).